The primary structure comprises 273 residues: Pantothenate synthetase (273 aa).

27-34 (MGALHEGH) is a binding site for ATP. The active-site Proton donor is the histidine 34. Residue glutamine 58 coordinates (R)-pantoate. Glutamine 58 contacts beta-alanine. An ATP-binding site is contributed by 144-147 (GKKD). Glutamine 150 contacts (R)-pantoate. ATP-binding positions include valine 173 and 181–184 (LSSR).

The protein belongs to the pantothenate synthetase family. In terms of assembly, homodimer.

It localises to the cytoplasm. The catalysed reaction is (R)-pantoate + beta-alanine + ATP = (R)-pantothenate + AMP + diphosphate + H(+). Its pathway is cofactor biosynthesis; (R)-pantothenate biosynthesis; (R)-pantothenate from (R)-pantoate and beta-alanine: step 1/1. Catalyzes the condensation of pantoate with beta-alanine in an ATP-dependent reaction via a pantoyl-adenylate intermediate. In Sulfurimonas denitrificans (strain ATCC 33889 / DSM 1251) (Thiomicrospira denitrificans (strain ATCC 33889 / DSM 1251)), this protein is Pantothenate synthetase.